A 460-amino-acid chain; its full sequence is Zinc transporter 6 (460 aa).

Over 1–33 (MGTIHLFRKPQRSFFGKLLQEFRLVAADRRSWK) the chain is Cytoplasmic. The chain crosses the membrane as a helical span at residues 34–54 (ILLFGAINVLCTGFLLMWCSS). Residues 55–64 (TNSIALTAYT) lie on the Extracellular side of the membrane. A helical membrane pass occupies residues 65-85 (YLTIFDLFSLITCLISYWVMM). At 86–98 (RKPSPVYSFGFER) the chain is on the cytoplasmic side. A helical membrane pass occupies residues 99–119 (LEVLAVFASTVLAQLGALFIL). Residues 120–134 (KESAERFLEQPEIHT) are Extracellular-facing. A helical transmembrane segment spans residues 135–155 (GRLLVGTFVALSFNLFTMLSI). Topologically, residues 156–200 (RNKPFAYVSEAASTSWLQEHVADLSRSLCGLIPGLSSIFLPRMNP) are cytoplasmic. Residues 201–221 (FVLIDLAGAFALCITYMLIEI) traverse the membrane as a helical segment. At 222 to 223 (NN) the chain is on the extracellular side. Residues 224 to 244 (YFAVDTASAIAIALMTFGTMY) traverse the membrane as a helical segment. The Cytoplasmic portion of the chain corresponds to 245-460 (PMSVYSGKVL…GINRMGQPRP (216 aa)). The tract at residues 371–390 (TPVTSTPAKPSSPPPEFSFN) is disordered.

The protein belongs to the cation diffusion facilitator (CDF) transporter (TC 2.A.4) family. SLC30A subfamily. Heterodimer with SLC30A5; form a functional zinc ion transmembrane transporter. In terms of tissue distribution, expressed in brain and liver, and to a lower extent also in lung. Highly expressed in brain (at protein level).

The protein resides in the golgi apparatus. It localises to the trans-Golgi network membrane. In terms of biological role, has probably no intrinsic transporter activity but together with SLC30A5 forms a functional zinc ion:proton antiporter heterodimer, mediating zinc entry into the lumen of organelles along the secretory pathway. As part of that zinc ion:proton antiporter, contributes to zinc ion homeostasis within the early secretory pathway and regulates the activation and folding of enzymes like alkaline phosphatases and enzymes involved in phosphatidylinositol glycan anchor biosynthesis. This Mus musculus (Mouse) protein is Zinc transporter 6 (Slc30a6).